The chain runs to 617 residues: Kelch-like protein diablo (617 aa).

The tract at residues 1–55 is disordered; it reads MGDPLLPGSTGLGSGGTAAATGGTGTTGTGLGSGGTSGTERPPSPARLTHTSEKH. The span at 10 to 37 shows a compositional bias: gly residues; the sequence is TGLGSGGTAAATGGTGTTGTGLGSGGTS. In terms of domain architecture, BTB spans 73–140; that stretch reads CDVVLNVGGR…CYTAHIIVEE (68 aa). A BACK domain is found at 175–277; that stretch reads CLGIRAFADT…SPKFLVGTVG (103 aa). Kelch repeat units lie at residues 324 to 370, 372 to 418, 419 to 465, 467 to 512, 514 to 559, and 560 to 606; these read VLFA…VLND, LYAV…VLDG, FLYA…VLSG, LYAI…VFNN, IYAV…VVNG, and QLYA…VMRA.

It functions in the pathway protein modification; protein ubiquitination. Probable substrate-specific adapter of an E3 ubiquitin-protein ligase complex which mediates the ubiquitination and subsequent proteasomal degradation of target proteins. May have a role in synapse differentiation and growth. In Drosophila mojavensis (Fruit fly), this protein is Kelch-like protein diablo.